The chain runs to 165 residues: DNA mimic protein DMP19 (165 aa).

Belongs to the DMP19-like protein family. In terms of assembly, monomer. Homodimer. The monomeric form of DMP19 interacts with the DNA-binding protein HU homodimer with 1:1 stoichiometry. The dimeric form of DMP19 interacts with the Neisseria hypothetical transcription factor (NHTF) dimer.

Its activity is regulated as follows. Activity can be modulated in vitro by crown ethers, which are small cyclic polyethers that can modify protein surface behavior dramatically by stabilizing either intra- or intermolecular interactions, thereby probably altering the protein's tertiary and quaternary structure. Acts as a DNA mimic. Interacts with DNA-binding proteins and prevents their binding to DNA by occupying the DNA binding sites on the proteins, acting as a competitive inhibitor. DMP19 is a bifunctional DNA mimic protein involved in controlling nucleoid formation as well as gene regulation. This bifunctionality depends on different oligomeric states. The monomeric form interacts with the DNA-binding protein HU, which prevents HU from binding to DNA and forming nucleoids. The dimeric form interacts with the Neisseria hypothetical transcription factor (NHTF) and prevents NHTF from binding to its DNA-binding sites, thereby blocking its repressor activity and influencing expression of the target genes. DMP19 might use these different oligomerizations to regulate genes in two steps: the monomeric form may first release selected gene regions in chromosomal DNA by preventing HU from binding to DNA and forming nucleoids, then the dimeric form blocks the gene repressor activity of NHTF and ensures the continued expression of NHTF-controlled genes. The chain is DNA mimic protein DMP19 from Neisseria meningitidis serogroup B (strain ATCC BAA-335 / MC58).